The chain runs to 527 residues: (3S)-3-amino-3-(3-chloro-4-hydroxyphenyl)propanoyl-[peptidyl-carrier protein SgcC2] monooxygenase (527 aa).

Positions 1-10 (MPHGAEREAS) are enriched in basic and acidic residues. The segment at 1 to 22 (MPHGAEREASPAEESAGTRPLT) is disordered. FAD contacts are provided by residues 161–163 (HAF), 167–170 (PVDR), and Thr202.

The protein belongs to the FADH(2)-utilizing monooxygenase family. As to quaternary structure, homotetramer.

It carries out the reaction (3S)-3-amino-3-(3-chloro-4-hydroxyphenyl)propanoyl-[SgcC2 peptidyl-carrier protein] + FADH2 + O2 = (3S)-3-amino-3-(3-chloro-4,5-dihydroxyphenyl)propanoyl-[SgcC2 peptidyl-carrier protein] + FAD + H2O + H(+). It participates in antibiotic biosynthesis. The SgcE6-SgcC hydroxylation activity decreases in the presence of excess FAD. In terms of biological role, oxygenase component of a two-component system involved in the biosynthesis of the enediyne antitumor antibiotic C-1027. Uses FADH(2) supplied by SgcE6 to catalyze the C-5 hydroxylation of (S)-3-chloro-beta-tyrosyl-S-SgcC2. Can also efficiently catalyze the regioselective hydroxylation of other 3-substituted beta-tyrosyl-S-SgcC2 analogs, including the bromo-, iodo-, fluoro-, and methyl-substituted analogs, but does not accept 3-hydroxy-beta-tyrosyl-S-SgcC2 as a substrate. Is only active with SgcC2 (peptidyl carrier protein)-tethered substrates. In Streptomyces globisporus, this protein is (3S)-3-amino-3-(3-chloro-4-hydroxyphenyl)propanoyl-[peptidyl-carrier protein SgcC2] monooxygenase.